The primary structure comprises 512 residues: Alpha-amylase (512 aa).

A signal peptide spans 1–15; the sequence is MKLFVLIALFGLGFA. Cystine bridges form between C43-C101, C85-C130, and C156-C175. The Ca(2+) site is built by N115, R173, and D182. Residue R210 participates in chloride binding. D212 functions as the Nucleophile in the catalytic mechanism. H216 is a binding site for Ca(2+). The active-site Proton donor is the E248. Chloride is bound at residue R352. Intrachain disulfides connect C394–C400 and C466–C478. N-linked (GlcNAc...) asparagine glycosylation is present at N496.

The protein belongs to the glycosyl hydrolase 13 family. It depends on Ca(2+) as a cofactor. Chloride is required as a cofactor.

Its subcellular location is the secreted. It catalyses the reaction Endohydrolysis of (1-&gt;4)-alpha-D-glucosidic linkages in polysaccharides containing three or more (1-&gt;4)-alpha-linked D-glucose units.. In terms of biological role, catalyzes the hydrolysis of alpha-1,4 glycosidic linkages in starch, glycogen and similar oligosaccharides. This Oryzias latipes (Japanese rice fish) protein is Alpha-amylase.